The sequence spans 2173 residues: Mediator of RNA polymerase II transcription subunit 12 (2173 aa).

8 disordered regions span residues 1-34, 318-345, 630-718, 784-804, 1380-1404, 1443-1467, 1737-1780, and 2020-2068; these read MAAFGVLSYEHRPLKRPRLGPPDVYPQDPKQKED, GGHQAHGISAQQGNALPPTPTSQPAGGN, ASNS…KGMD, KSTAETGGEEGQKRKRSKPEA, MNSSNPSWNGSAVSGSSVSNSNSAS, ELEKGQHLGPSSRKERDRQKQKSMS, EEEP…VKQE, and QGIH…FRPQ. Over residues 702 to 717 the composition is skewed to basic and acidic residues; the sequence is QAQEQESKSTAKDKGM. Residues 1389–1404 show a composition bias toward low complexity; sequence GSAVSGSSVSNSNSAS. 2 stretches are compositionally biased toward basic and acidic residues: residues 1443 to 1462 and 1747 to 1759; these read ELEKGQHLGPSSRKERDRQK and EPDKKLDTAKVEK. The segment covering 2034–2057 has biased composition (low complexity); sequence QQQQQQQQQQQQQQQQQQVHQQQQ.

It belongs to the Mediator complex subunit 12 family. As to quaternary structure, component of the Mediator complex.

The protein localises to the nucleus. Its function is as follows. Component of the Mediator complex, a coactivator involved in regulated gene transcription of nearly all RNA polymerase II-dependent genes. Mediator functions as a bridge to convey information from gene-specific regulatory proteins to the basal RNA polymerase II transcription machinery. Mediator is recruited to promoters by direct interactions with regulatory proteins and serves as a scaffold for the assembly of a functional preinitiation complex with RNA polymerase II and the general transcription factors. Required for development of the body axis, brain, ear, kidney, forelimb and neural crest and for pigmentation. Acts as a coactivator for sox9a and/or sox9b promoting the expression of several neuronal determination genes. The protein is Mediator of RNA polymerase II transcription subunit 12 (med12) of Danio rerio (Zebrafish).